The chain runs to 373 residues: Dual-specificity RNA methyltransferase RlmN (373 aa).

The Proton acceptor role is filled by E94. The 240-residue stretch at 100-339 (EDDRATLCVS…VIVRKTRGDD (240 aa)) folds into the Radical SAM core domain. C107 and C344 are oxidised to a cystine. [4Fe-4S] cluster-binding residues include C114, C118, and C121. S-adenosyl-L-methionine is bound by residues 168–169 (GE), S200, 222–224 (SIH), and N301. The active-site S-methylcysteine intermediate is C344.

Belongs to the radical SAM superfamily. RlmN family. [4Fe-4S] cluster is required as a cofactor.

The protein resides in the cytoplasm. It catalyses the reaction adenosine(2503) in 23S rRNA + 2 reduced [2Fe-2S]-[ferredoxin] + 2 S-adenosyl-L-methionine = 2-methyladenosine(2503) in 23S rRNA + 5'-deoxyadenosine + L-methionine + 2 oxidized [2Fe-2S]-[ferredoxin] + S-adenosyl-L-homocysteine. The catalysed reaction is adenosine(37) in tRNA + 2 reduced [2Fe-2S]-[ferredoxin] + 2 S-adenosyl-L-methionine = 2-methyladenosine(37) in tRNA + 5'-deoxyadenosine + L-methionine + 2 oxidized [2Fe-2S]-[ferredoxin] + S-adenosyl-L-homocysteine. In terms of biological role, specifically methylates position 2 of adenine 2503 in 23S rRNA and position 2 of adenine 37 in tRNAs. m2A2503 modification seems to play a crucial role in the proofreading step occurring at the peptidyl transferase center and thus would serve to optimize ribosomal fidelity. In Shewanella denitrificans (strain OS217 / ATCC BAA-1090 / DSM 15013), this protein is Dual-specificity RNA methyltransferase RlmN.